We begin with the raw amino-acid sequence, 315 residues long: AT-hook motif nuclear-localized protein 19 (315 aa).

Over residues 1–25 the composition is skewed to polar residues; the sequence is MANPWWTGQVNLSGLETTPPGSSQL. Disordered stretches follow at residues 1 to 104 and 239 to 285; these read MANP…RDSP and EEEA…YNMP. A compositionally biased stretch (basic and acidic residues) spans 61-74; that stretch reads DNLSGDDHEPREGA. Positions 80–92 form a DNA-binding region, a.T hook; the sequence is RRPRGRPAGSKNK. One can recognise a PPC domain in the interval 104 to 248; the sequence is PNALKSHVME…EEEAAERGGG (145 aa). Gly residues predominate over residues 245–276; that stretch reads RGGGGGSGGVVPGQLGGGGSPLSSGAGGGDGN.

As to expression, slightly expressed in roots.

Its subcellular location is the nucleus. In terms of biological role, transcription factor that specifically binds AT-rich DNA sequences related to the nuclear matrix attachment regions (MARs). Negatively regulates plant innate immunity (PTI) to pathogens through the down-regulation of the PAMP-triggered FRK1 expression. Positively regulates defense against fungal Verticillium infection. This is AT-hook motif nuclear-localized protein 19 from Arabidopsis thaliana (Mouse-ear cress).